The primary structure comprises 283 residues: Phosphatidylserine decarboxylase proenzyme (283 aa).

Active-site charge relay system; for autoendoproteolytic cleavage activity residues include Asp96, His152, and Ser250. Ser250 serves as the catalytic Schiff-base intermediate with substrate; via pyruvic acid; for decarboxylase activity. Pyruvic acid (Ser); by autocatalysis is present on Ser250.

The protein belongs to the phosphatidylserine decarboxylase family. PSD-B subfamily. Prokaryotic type I sub-subfamily. Heterodimer of a large membrane-associated beta subunit and a small pyruvoyl-containing alpha subunit. It depends on pyruvate as a cofactor. Post-translationally, is synthesized initially as an inactive proenzyme. Formation of the active enzyme involves a self-maturation process in which the active site pyruvoyl group is generated from an internal serine residue via an autocatalytic post-translational modification. Two non-identical subunits are generated from the proenzyme in this reaction, and the pyruvate is formed at the N-terminus of the alpha chain, which is derived from the carboxyl end of the proenzyme. The autoendoproteolytic cleavage occurs by a canonical serine protease mechanism, in which the side chain hydroxyl group of the serine supplies its oxygen atom to form the C-terminus of the beta chain, while the remainder of the serine residue undergoes an oxidative deamination to produce ammonia and the pyruvoyl prosthetic group on the alpha chain. During this reaction, the Ser that is part of the protease active site of the proenzyme becomes the pyruvoyl prosthetic group, which constitutes an essential element of the active site of the mature decarboxylase.

Its subcellular location is the cell membrane. The catalysed reaction is a 1,2-diacyl-sn-glycero-3-phospho-L-serine + H(+) = a 1,2-diacyl-sn-glycero-3-phosphoethanolamine + CO2. The protein operates within phospholipid metabolism; phosphatidylethanolamine biosynthesis; phosphatidylethanolamine from CDP-diacylglycerol: step 2/2. In terms of biological role, catalyzes the formation of phosphatidylethanolamine (PtdEtn) from phosphatidylserine (PtdSer). The sequence is that of Phosphatidylserine decarboxylase proenzyme from Acinetobacter baumannii (strain ACICU).